Here is a 912-residue protein sequence, read N- to C-terminus: Ubiquitin carboxyl-terminal hydrolase 20 (912 aa).

The UBP-type zinc-finger motif lies at 6–111 (DLCPHLDSIG…GPAPKFSEQD (106 aa)). Residues cysteine 8, histidine 10, cysteine 30, cysteine 33, cysteine 43, cysteine 48, cysteine 53, histidine 60, histidine 64, histidine 70, cysteine 83, and cysteine 86 each coordinate Zn(2+). The interval 101–120 (PGPAPKFSEQDSPPPSHPLK) is disordered. Serine 112, serine 132, and serine 134 each carry phosphoserine. A USP domain is found at 145–683 (TGMKNLGNSC…EAYVLFYRKS (539 aa)). Cysteine 154 functions as the Nucleophile in the catalytic mechanism. 2 disordered regions span residues 258–308 (LTEA…GSQA) and 322–415 (ISEK…ASPV). The residue at position 259 (threonine 259) is a Phosphothreonine. Positions 260 to 280 (EARDSDSSDTDEKREGDRSPS) are enriched in basic and acidic residues. The residue at position 306 (serine 306) is a Phosphoserine. Basic and acidic residues predominate over residues 322-333 (ISEKERMKDRKF). Serine 369 bears the Phosphoserine mark. The residue at position 378 (threonine 378) is a Phosphothreonine. Serine 408 and serine 413 each carry phosphoserine. Histidine 641 (proton acceptor) is an active-site residue. DUSP domains follow at residues 685–778 (EEAV…LYVC) and 787–890 (ALAK…RQSV).

The protein belongs to the peptidase C19 family. USP20/USP33 subfamily. In terms of assembly, interacts with VHL, leading to its ubiquitination and subsequent degradation. Interacts with CCP110. Interacts with DIO2. Interacts with HIF1A. Interacts with ADRB2. Interacts with USP18. Post-translationally, ubiquitinated via a VHL-dependent pathway for proteasomal degradation.

It localises to the cytoplasm. It is found in the endoplasmic reticulum. The protein resides in the perinuclear region. The protein localises to the cytoskeleton. Its subcellular location is the microtubule organizing center. It localises to the centrosome. The catalysed reaction is Thiol-dependent hydrolysis of ester, thioester, amide, peptide and isopeptide bonds formed by the C-terminal Gly of ubiquitin (a 76-residue protein attached to proteins as an intracellular targeting signal).. Its function is as follows. Deubiquitinating enzyme that plays a role in many cellular processes including autophagy, cellular antiviral response or membrane protein biogenesis. Attenuates TLR4-mediated NF-kappa-B signaling by cooperating with beta-arrestin-2/ARRB2 and inhibiting TRAF6 autoubiquitination. Promotes cellular antiviral responses by deconjugating 'Lys-33' and 'Lys-48'-linked ubiquitination of STING1 leading to its stabilization. Plays an essential role in autophagy induction by regulating the ULK1 stability through deubiquitination of ULK1. Acts as a positive regulator for NF-kappa-B activation by TNF-alpha through deubiquitinating 'Lys-48'-linked polyubiquitination of SQSTM1, leading to its increased stability. Acts as a regulator of G-protein coupled receptor (GPCR) signaling by mediating the deubiquitination beta-2 adrenergic receptor (ADRB2). Plays a central role in ADRB2 recycling and resensitization after prolonged agonist stimulation by constitutively binding ADRB2, mediating deubiquitination of ADRB2 and inhibiting lysosomal trafficking of ADRB2. Upon dissociation, it is probably transferred to the translocated beta-arrestins, possibly leading to beta-arrestins deubiquitination and disengagement from ADRB2. This suggests the existence of a dynamic exchange between the ADRB2 and beta-arrestins. Deubiquitinates DIO2, thereby regulating thyroid hormone regulation. Deubiquitinates HIF1A, leading to stabilize HIF1A and enhance HIF1A-mediated activity. Deubiquitinates MCL1, a pivotal member of the anti-apoptotic Bcl-2 protein family to regulate its stability. Within the endoplasmic reticulum, participates with USP33 in the rescue of post-translationally targeted membrane proteins that are inappropriately ubiquitinated by the cytosolic protein quality control in the cytosol. The sequence is that of Ubiquitin carboxyl-terminal hydrolase 20 (USP20) from Bos taurus (Bovine).